The chain runs to 193 residues: Acyl-homoserine-lactone synthase (193 aa).

The protein belongs to the autoinducer synthase family.

The enzyme catalyses a fatty acyl-[ACP] + S-adenosyl-L-methionine = an N-acyl-L-homoserine lactone + S-methyl-5'-thioadenosine + holo-[ACP] + H(+). In terms of biological role, required for the synthesis of OHHL (N-(3-oxohexanoyl)-L-homoserine lactone) also known as VAI or N-(beta-ketocaproyl)homoserine lactone or 3-oxo-N-(tetrahydro-2-oxo-3-furanyl)-hexanamide, an autoinducer molecule which binds to LuxR and thus acts in bioluminescence regulation. The chain is Acyl-homoserine-lactone synthase (luxI) from Aliivibrio fischeri (Vibrio fischeri).